Here is a 142-residue protein sequence, read N- to C-terminus: Large ribosomal subunit protein uL13 (142 aa).

The protein belongs to the universal ribosomal protein uL13 family. In terms of assembly, part of the 50S ribosomal subunit.

Functionally, this protein is one of the early assembly proteins of the 50S ribosomal subunit, although it is not seen to bind rRNA by itself. It is important during the early stages of 50S assembly. The protein is Large ribosomal subunit protein uL13 of Xylella fastidiosa (strain M23).